A 742-amino-acid chain; its full sequence is Collectin-12 (742 aa).

At 1–37 (MKDDFAEEEEVQSFGYKRFGIQEGTQCTKCKNNWALK) the chain is on the cytoplasmic side. A helical; Signal-anchor for type II membrane protein membrane pass occupies residues 38-58 (FSIVLLYILCALLTITVAILG). Over 59 to 742 (YKVVEKMDNV…EREAVPSSIL (684 aa)) the chain is Extracellular. Residue N67 is glycosylated (N-linked (GlcNAc...) asparagine). Residues 73-142 (ETSHQTYDNK…KDTLEKLQAN (70 aa)) are a coiled coil. Residues N159 and N168 are each glycosylated (N-linked (GlcNAc...) asparagine). A coiled-coil region spans residues 205-254 (NLNNLNLTQVQQRNLISNLQQSVDDTSLAIQRIKNDFQNLQQVFLQAKKD). The N-linked (GlcNAc...) asparagine glycan is linked to N271. Residues 439–608 (TILQGPPGPR…TPASEVNGCP (170 aa)) form a disordered region. 2 Collagen-like domains span residues 452–511 (GDRG…KGSR) and 527–586 (GPPG…PGPS). Over residues 501–514 (SKGSQGPKGSRGSP) the composition is skewed to low complexity. Pro residues predominate over residues 516 to 532 (KPGPQGPSGDPGPPGPP). A compositionally biased stretch (low complexity) spans 534-556 (KDGLPGPQGPPGFQGLQGTVGEP). Over residues 571 to 585 (PGMPGPKGPPGPPGP) the composition is skewed to pro residues. Disulfide bonds link C607-C618, C635-C730, and C708-C722. The C-type lectin domain occupies 614-731 (FTDKCYYFSL…CDEINNFICE (118 aa)). Ca(2+)-binding residues include F644, N646, E650, D670, and E674. K691, Q694, and D696 together coordinate a carbohydrate. Residues Q694, D696, N697, E706, D707, N718, D719, and E731 each coordinate Ca(2+). E706 serves as a coordination point for a carbohydrate. 2 residues coordinate a carbohydrate: N718 and D719.

As to quaternary structure, the extracellular domain forms a stable trimer. The extracellular domain interacts with fibrillar amyloid-beta peptide. Expressed in vascular endothelial cells in the heart, in perivascular macrophage and smooth muscle cells. Expressed in plaques-surrounding reactive astrocytes located in cerebral cortex and hippocampus and in leptomeningeal vessels showing characteristics of cerebral amyloid angiopathy (CAA) in a double transgenic mouse model of Alzheimer disease (at protein level). Strongly expressed in lung. Moderately expressed in heart, skeletal muscle, spleen, liver, brain, colon, testis, stomach and kidney. Expressed in neonatal astrocytes. Expressed in reactive astrocytes and vascular/perivascular cells in the brain of a double transgenic mouse model of Alzheimer disease.

The protein resides in the membrane. Functionally, scavenger receptor that displays several functions associated with host defense. Promotes binding and phagocytosis of Gram-positive, Gram-negative bacteria and yeast. Also binds to sialyl Lewis X or a trisaccharide and asialo-orosomucoid (ASOR). Mediates the recognition, internalization and degradation of oxidatively modified low density lipoprotein (oxLDL) by vascular endothelial cells. Binds to several carbohydrates including Gal-type ligands, D-galactose, L- and D-fucose, GalNAc, T and Tn antigens in a calcium-dependent manner and internalizes specifically GalNAc in nurse-like cells. This chain is Collectin-12 (Colec12), found in Mus musculus (Mouse).